The chain runs to 250 residues: Triosephosphate isomerase (250 aa).

A substrate-binding site is contributed by 9–11; the sequence is NWK. The active-site Electrophile is His-95. Glu-167 serves as the catalytic Proton acceptor. Substrate contacts are provided by residues Gly-173, Ser-213, and 234–235; that span reads GG.

The protein belongs to the triosephosphate isomerase family. Homodimer.

It is found in the cytoplasm. The enzyme catalyses D-glyceraldehyde 3-phosphate = dihydroxyacetone phosphate. The protein operates within carbohydrate biosynthesis; gluconeogenesis. It participates in carbohydrate degradation; glycolysis; D-glyceraldehyde 3-phosphate from glycerone phosphate: step 1/1. Involved in the gluconeogenesis. Catalyzes stereospecifically the conversion of dihydroxyacetone phosphate (DHAP) to D-glyceraldehyde-3-phosphate (G3P). The polypeptide is Triosephosphate isomerase (Herpetosiphon aurantiacus (strain ATCC 23779 / DSM 785 / 114-95)).